The primary structure comprises 302 residues: GTP cyclohydrolase FolE2 (302 aa).

It belongs to the GTP cyclohydrolase IV family.

The catalysed reaction is GTP + H2O = 7,8-dihydroneopterin 3'-triphosphate + formate + H(+). The protein operates within cofactor biosynthesis; 7,8-dihydroneopterin triphosphate biosynthesis; 7,8-dihydroneopterin triphosphate from GTP: step 1/1. Its function is as follows. Converts GTP to 7,8-dihydroneopterin triphosphate. This is GTP cyclohydrolase FolE2 from Pseudoalteromonas translucida (strain TAC 125).